Consider the following 148-residue polypeptide: Hut operon positive regulatory protein (148 aa).

The protein belongs to the HutP family. Homohexamer.

In terms of biological role, antiterminator that binds to cis-acting regulatory sequences on the mRNA in the presence of histidine, thereby suppressing transcription termination and activating the hut operon for histidine utilization. The protein is Hut operon positive regulatory protein of Bacillus velezensis (strain DSM 23117 / BGSC 10A6 / LMG 26770 / FZB42) (Bacillus amyloliquefaciens subsp. plantarum).